A 336-amino-acid chain; its full sequence is MTQAQNYVIPPGSKVLVTGANGYIASHIVKALLDLGYLVRGTVRTPMPWLAEYFERQCGLGRFELIVVSDFQQPDAFDESVKGVSGVIHVAQGLPSSTAAETVKSATAYTVNGVINLFKAASTQRTIQRVVLTSSIVAAGYPTGKGFKLDADSWDESLEQASKDGTTVPIYRACKIEGERQAWKWVEKNQPHFELNSVLPWLTLGKILHPNIGGSTMGYVSGLLRGDTTPFKFLPLPWFVDVEDTARLHAIALLNPSVRSERLFATAAPFTWGDVIEILKRIQPNNARIPAAPIQEEPTLGDVVPAARAEKLLRETFGQLGWTPLEVSLESGIARE.

An NADP(+)-binding site is contributed by Tyr-171.

It belongs to the NAD(P)-dependent epimerase/dehydratase family. Dihydroflavonol-4-reductase subfamily.

It participates in secondary metabolite biosynthesis; terpenoid biosynthesis. Ketoreductase; part of the gene cluster that mediates the biosynthesis of andrastins, meroterpenoid compounds that exhibit inhibitory activity against ras farnesyltransferase, suggesting that they could be promising leads for antitumor agents. The first step of the pathway is the synthesis of 3,5-dimethylorsellinic acid (DMOA) by the polyketide synthase adrD via condensation of one acetyl-CoA starter unit with 3 malonyl-CoA units and 2 methylations. DMAO is then converted to farnesyl-DMAO by the prenyltransferase adrG. The methyltransferase adrK catalyzes the methylation of the carboxyl group of farnesyl-DMAO to farnesyl-DMAO methyl ester which is further converted to epoxyfarnesyl-DMAO methyl ester by the FAD-dependent monooxygenase adrH. The terpene cyclase adrI then catalyzes the carbon skeletal rearrangement to generate the andrastin E, the first compound in the pathway having the andrastin scaffold, with the tetracyclic ring system. The post-cyclization tailoring enzymes adrF, adrE, adrJ, and adrA, are involved in the conversion of andrastin E into andrastin A. The short chain dehydrogenase adrF is responsible for the oxidation of the C-3 a hydroxyl group of andrastin E to yield the corresponding ketone, andrastin D. The ketoreductase adrE stereoselectively reduces the carbonyl moiety to reverse the stereochemistry of the C-3 position to yield andrastin F. The acetyltransferase adrJ is the acetyltransferase that attaches the acetyl group to the C-3 hydroxyl group of andrastin F to yield andrastin C. Finally, the cytochrome P450 monooxygenase adrA catalyzes two sequential oxidation reactions of the C-23 methyl group, to generate the corresponding alcohol andrastin B, and aldehyde andrastin A. The protein is Ketoreductase adrE of Penicillium roqueforti.